Reading from the N-terminus, the 225-residue chain is Probable septum site-determining protein MinC (225 aa).

The protein belongs to the MinC family. Interacts with MinD and FtsZ.

Cell division inhibitor that blocks the formation of polar Z ring septums. Rapidly oscillates between the poles of the cell to destabilize FtsZ filaments that have formed before they mature into polar Z rings. Prevents FtsZ polymerization. This is Probable septum site-determining protein MinC from Listeria monocytogenes serotype 4a (strain HCC23).